The sequence spans 229 residues: 7-cyano-7-deazaguanine synthase (229 aa).

9–19 (LSGGLDSATVL) contacts ATP. The Zn(2+) site is built by C188, C198, C201, and C204.

Belongs to the QueC family. Zn(2+) is required as a cofactor.

The catalysed reaction is 7-carboxy-7-deazaguanine + NH4(+) + ATP = 7-cyano-7-deazaguanine + ADP + phosphate + H2O + H(+). It participates in purine metabolism; 7-cyano-7-deazaguanine biosynthesis. Its function is as follows. Catalyzes the ATP-dependent conversion of 7-carboxy-7-deazaguanine (CDG) to 7-cyano-7-deazaguanine (preQ(0)). The sequence is that of 7-cyano-7-deazaguanine synthase from Methylobacillus flagellatus (strain ATCC 51484 / DSM 6875 / VKM B-1610 / KT).